Consider the following 348-residue polypeptide: MTSVTRSEDQEPTMSETQDRPLQPSLKPLEALPQSSAYQEMMTQGVSEEKNHLGSNPGEGESCGADHQEGSQLRSFHLSPQEQSIRPQDRRQSWRRASMKEVNRRKSLAPFHPGITELCRSISVKLAQSQRLGALLLSSFQFSVEKLEPFLKNTKDFSLECFRAKASSLSEELKHFTDRLGNDGTLQKCFVEDSKEKAADFSLEASVAEVKEYITKFSLERQAWDRLLLQYQNEVPPEEMPRGSTETRITEVKVDPAAYLRSSQKEVLSTKPDYQRIVQDQNQVFAYVELVMDELQGSVKQLQALMDESTQYLQKVSVQLKKRSMDQLDSSPARKLLKLPLQSSPSTQ.

The tract at residues 1–105 is disordered; sequence MTSVTRSEDQ…RASMKEVNRR (105 aa). Phosphoserine is present on Ser-25. Composition is skewed to polar residues over residues 33 to 46 and 70 to 86; these read PQSSAYQEMMTQGV and GSQLRSFHLSPQEQSIR. Phosphoserine is present on residues Ser-75 and Ser-79. The segment covering 87-104 has biased composition (basic and acidic residues); that stretch reads PQDRRQSWRRASMKEVNR. Phosphoserine occurs at positions 107 and 123. Lys-253 participates in a covalent cross-link: Glycyl lysine isopeptide (Lys-Gly) (interchain with G-Cter in SUMO2). The interval 325–348 is disordered; the sequence is MDQLDSSPARKLLKLPLQSSPSTQ. Ser-331 is modified (phosphoserine). Over residues 338–348 the composition is skewed to low complexity; that stretch reads KLPLQSSPSTQ.

As to quaternary structure, component of the MIS12 complex composed of MIS12, DSN1, NSL1 and PMF1. Also interacts with KNL1, CBX3 and CBX5. Interacts with KNSTRN.

The protein resides in the nucleus. Its subcellular location is the chromosome. It is found in the centromere. The protein localises to the kinetochore. Part of the MIS12 complex which is required for normal chromosome alignment and segregation and kinetochore formation during mitosis. The sequence is that of Kinetochore-associated protein DSN1 homolog (Dsn1) from Mus musculus (Mouse).